Here is a 493-residue protein sequence, read N- to C-terminus: Probable vesicular acetylcholine transporter-B (493 aa).

Residues 1 to 39 (MQSTGAPGLAQSAVLQLSAMGERSRELGGALREPERKRR) are Cytoplasmic-facing. Residues 40–60 (LLLVVVCVALLLDNMLYMVIV) traverse the membrane as a helical segment. Residues 61–86 (PIIPDYLADLRGERGNSSADLDIQIG) lie on the Lumenal, vesicle side of the membrane. Asparagine 76 is a glycosylation site (N-linked (GlcNAc...) asparagine). Residues 87 to 107 (VLFASKALLQLLVNPLSGTFI) traverse the membrane as a helical segment. Residues 108 to 113 (DRVGYD) are Cytoplasmic-facing. A helical transmembrane segment spans residues 114–134 (LPLLIGLLVMFLSTCIFAFAE). The Lumenal, vesicle portion of the chain corresponds to 135–143 (NYGTLFAAR). A helical transmembrane segment spans residues 144–164 (SLQGLGSAFADTSGIAMIADK). Residues 165-174 (FTEEAERSRA) are Cytoplasmic-facing. The helical transmembrane segment at 175-195 (LGIALAFISFGSLVAPPFGGI) threads the bilayer. Over 196 to 203 (LYEFAGKR) the chain is Lumenal, vesicle. Residues 204–224 (VPFIVLACVCLADGVLLLTVV) traverse the membrane as a helical segment. Residues 225–247 (KPFSDRTRENMPVGTPIHRLMVD) are Cytoplasmic-facing. Residues 248–268 (PYIAVVAGALTVCNIPLAFLE) traverse the membrane as a helical segment. The Lumenal, vesicle portion of the chain corresponds to 269-284 (PTIANWMESTMDASKW). A helical transmembrane segment spans residues 285–305 (QMGLVWLPAFLPHVLGVYITV). Over 306–315 (RLAARYPERQ) the chain is Cytoplasmic. Residues 316-336 (WFYGALGMVIIGASSCTVPAC) traverse the membrane as a helical segment. Residues 337-347 (KTFGELVFPLC) are Lumenal, vesicle-facing. A helical transmembrane segment spans residues 348–368 (GICFGIALVDTALLPTLAFLV). Residues 369-378 (DVRHVSVYGS) are Cytoplasmic-facing. Residues 379 to 399 (VYAIADISYSVAYAMGPVVAG) traverse the membrane as a helical segment. Residues 400–406 (QIVHNLG) are Lumenal, vesicle-facing. The helical transmembrane segment at 407–427 (FVQLNLGMGLVNVLYAPALLL) threads the bilayer. Over 428-493 (LRPVCQIKPS…EEEESGPESA (66 aa)) the chain is Cytoplasmic. The interval 467 to 493 (GLSAGAGTEHGLRGRSEEEEESGPESA) is disordered. Over residues 483–493 (EEEEESGPESA) the composition is skewed to acidic residues.

Belongs to the major facilitator superfamily. Vesicular transporter family.

Its subcellular location is the membrane. Its function is as follows. Involved in acetylcholine transport into synaptic vesicles. The protein is Probable vesicular acetylcholine transporter-B (slc18a3b) of Danio rerio (Zebrafish).